Consider the following 382-residue polypeptide: Na(+)/H(+) antiporter NhaA (382 aa).

Helical transmembrane passes span 11-31, 47-67, 88-108, 116-136, 145-165, 170-190, 261-283, 299-319, 327-347, and 353-373; these read FSVP…LDPA, FHFV…AVEI, LATL…NAII, GWGI…RLVF, FLLL…AVFY, HPTE…AYIL, IVVD…SSVG, LGIF…PQQV, TGLV…VAFV, and GSAK…IMLG.

Belongs to the NhaA Na(+)/H(+) (TC 2.A.33) antiporter family.

The protein resides in the cell inner membrane. The enzyme catalyses Na(+)(in) + 2 H(+)(out) = Na(+)(out) + 2 H(+)(in). Its function is as follows. Na(+)/H(+) antiporter that extrudes sodium in exchange for external protons. The protein is Na(+)/H(+) antiporter NhaA of Geobacter sulfurreducens (strain ATCC 51573 / DSM 12127 / PCA).